The sequence spans 474 residues: Synaptotagmin 1 (474 aa).

2 disordered regions span residues 1-49 (MPPN…DRQE) and 63-84 (QRIA…ESTT). Topologically, residues 1-107 (MPPNAKSETD…EVVTEVIAER (107 aa)) are vesicular. Residues 30 to 49 (VDQKLEETHHSKFREVDRQE) show a composition bias toward basic and acidic residues. The segment covering 69–84 (ESTTRSATTEAQESTT) has biased composition (low complexity). The chain crosses the membrane as a helical span at residues 108–134 (TGLPTWGVVAIIILVFLVVFGIIFFCV). Topologically, residues 135–474 (RRFLKKRRTK…ETDEILKNMK (340 aa)) are cytoplasmic. The segment at 170 to 189 (PDMEELTENAEEGDEEDKQS) is disordered. A compositionally biased stretch (acidic residues) spans 171–187 (DMEELTENAEEGDEEDK). The phospholipid binding stretch occupies residues 186–434 (DKQSEQKLGR…PIGRCILGCM (249 aa)). C2 domains follow at residues 192-312 (KLGR…EEWR) and 325-458 (KLGD…AQWH). Ca(2+) contacts are provided by Leu-222, Asp-223, Asp-229, Asp-282, Phe-283, Asp-284, Ser-287, Lys-288, Asp-290, Asp-356, Asp-362, Asp-416, and Asp-418.

This sequence belongs to the synaptotagmin family. Homodimer or homotrimer (Potential). Identified in a complex with Syn and nwk. Interacts with StnA and StnB via its second C2 domain. This interaction may mediate its retrieval from the plasma membrane, thereby facilitating the internalization of multiple synaptic vesicles from the plasma membrane. Ca(2+) is required as a cofactor.

Its subcellular location is the cytoplasmic vesicle. It is found in the secretory vesicle. It localises to the synaptic vesicle membrane. The protein resides in the synapse. In terms of biological role, may have a regulatory role in the membrane interactions during trafficking of synaptic vesicles at the active zone of the synapse. It binds acidic phospholipids with a specificity that requires the presence of both an acidic head group and a diacyl backbone. The polypeptide is Synaptotagmin 1 (Syt1) (Drosophila melanogaster (Fruit fly)).